A 335-amino-acid chain; its full sequence is UDP-N-acetylenolpyruvoylglucosamine reductase 1 (335 aa).

The 167-residue stretch at 36–202 (RIGGPAAVFA…LEVELLLKPG (167 aa)) folds into the FAD-binding PCMH-type domain. Residue Arg181 is part of the active site. Ser231 (proton donor) is an active-site residue. Residue Glu306 is part of the active site.

Belongs to the MurB family. FAD is required as a cofactor.

It is found in the cytoplasm. The catalysed reaction is UDP-N-acetyl-alpha-D-muramate + NADP(+) = UDP-N-acetyl-3-O-(1-carboxyvinyl)-alpha-D-glucosamine + NADPH + H(+). The protein operates within cell wall biogenesis; peptidoglycan biosynthesis. Its function is as follows. Cell wall formation. The protein is UDP-N-acetylenolpyruvoylglucosamine reductase 1 (murB1) of Corynebacterium glutamicum (strain ATCC 13032 / DSM 20300 / JCM 1318 / BCRC 11384 / CCUG 27702 / LMG 3730 / NBRC 12168 / NCIMB 10025 / NRRL B-2784 / 534).